Reading from the N-terminus, the 36-residue chain is Photosystem I reaction center subunit VIII (36 aa).

A helical transmembrane segment spans residues 7 to 29; it reads PSILVPLVGLVFPAITLASLFIY.

The protein belongs to the PsaI family.

It is found in the plastid. The protein localises to the chloroplast thylakoid membrane. In terms of biological role, may help in the organization of the PsaL subunit. The protein is Photosystem I reaction center subunit VIII of Anthoceros angustus (Hornwort).